The following is a 146-amino-acid chain: Hemoglobin subunit beta (146 aa).

The Globin domain maps to 2 to 146 (HWSAEEKQLI…VAHALARKYH (145 aa)). Positions 63 and 92 each coordinate heme b.

Belongs to the globin family. In terms of assembly, heterotetramer of two alpha chains and two beta chains. In terms of tissue distribution, red blood cells.

Its function is as follows. Involved in oxygen transport from the lung to the various peripheral tissues. In Phasianus colchicus colchicus (Black-necked pheasant), this protein is Hemoglobin subunit beta (HBB).